The sequence spans 88 residues: Small ribosomal subunit protein bS16 (88 aa).

It belongs to the bacterial ribosomal protein bS16 family.

The polypeptide is Small ribosomal subunit protein bS16 (Mycoplasmopsis pulmonis (strain UAB CTIP) (Mycoplasma pulmonis)).